The following is a 282-amino-acid chain: MSDNIISFDHVTFTYPDSPRPAVSDLSFAIERGSWTALIGHNGSGKSTVSKLINGLLAPDDLDKSSITVDGVKLGADTVWEVREKVGIVFQNPDNQFVGATVSDDVAFGLENRAVPRPEMLKIVAQAVADVGMADYADSEPSNLSGGQKQRVAIAGILAVKPQVIILDESTSMLDPEGKEQILDLVRKIKEDNNLTVISITHDLEEAAGADQVLVLDDGQLLDQGKPEEIFPKVEMLKRIGLDIPFVYRLKQLLKERGIVLPDEIDDDEKLVQSLWQLNSKM.

The ABC transporter domain occupies 6–243; the sequence is ISFDHVTFTY…VEMLKRIGLD (238 aa). 40 to 47 is an ATP binding site; that stretch reads GHNGSGKS.

Belongs to the ABC transporter superfamily. Energy-coupling factor EcfA family. As to quaternary structure, forms a stable energy-coupling factor (ECF) transporter complex composed of 2 membrane-embedded substrate-binding proteins (S component), 2 ATP-binding proteins (A component) and 2 transmembrane proteins (T component).

It localises to the cell membrane. Its function is as follows. ATP-binding (A) component of a common energy-coupling factor (ECF) ABC-transporter complex. Unlike classic ABC transporters this ECF transporter provides the energy necessary to transport a number of different substrates. The chain is Energy-coupling factor transporter ATP-binding protein EcfA1 from Lactobacillus delbrueckii subsp. bulgaricus (strain ATCC BAA-365 / Lb-18).